Here is a 78-residue protein sequence, read N- to C-terminus: Large ribosomal subunit protein bL28 (78 aa).

Belongs to the bacterial ribosomal protein bL28 family.

This chain is Large ribosomal subunit protein bL28, found in Synechococcus sp. (strain WH7803).